A 153-amino-acid polypeptide reads, in one-letter code: Nucleoside diphosphate kinase (153 aa).

Positions 13, 61, 89, 95, 106, and 116 each coordinate ATP. H119 acts as the Pros-phosphohistidine intermediate in catalysis.

This sequence belongs to the NDK family. The cofactor is Mg(2+). In terms of tissue distribution, highest levels in the liver and kidney with lower levels in the heart, brain and breast muscle.

It is found in the cytoplasm. It localises to the cell membrane. It carries out the reaction a 2'-deoxyribonucleoside 5'-diphosphate + ATP = a 2'-deoxyribonucleoside 5'-triphosphate + ADP. The catalysed reaction is a ribonucleoside 5'-diphosphate + ATP = a ribonucleoside 5'-triphosphate + ADP. Functionally, major role in the synthesis of nucleoside triphosphates other than ATP. The ATP gamma phosphate is transferred to the NDP beta phosphate via a ping-pong mechanism, using a phosphorylated active-site intermediate. In Columba livia (Rock dove), this protein is Nucleoside diphosphate kinase.